Here is a 339-residue protein sequence, read N- to C-terminus: Probable G-protein coupled receptor 33 (339 aa).

Residues 1 to 30 (MDRVNSSGHVISVSPSLTNSTGVPTPAPKA) are Extracellular-facing. N-linked (GlcNAc...) asparagine glycosylation is found at Asn-5 and Asn-19. A helical membrane pass occupies residues 31 to 53 (IIAAALFMSFIVGTISNGLYLWM). The Cytoplasmic segment spans residues 54–64 (LKFKMQRTVNT). A helical transmembrane segment spans residues 65–86 (LLFFHLILSYFISTLILPFMAT). At 87-103 (SFLQDNHWAFGSVLCKV) the chain is on the extracellular side. Cys-101 and Cys-179 are joined by a disulfide. Residues 104–124 (FNSTLSVSMFASVFFLSAISV) traverse the membrane as a helical segment. Residues 125-143 (DRYHLTLHPVWSQQHRTPR) lie on the Cytoplasmic side of the membrane. A helical membrane pass occupies residues 144-165 (WASRIALRIWILATILSIPYLV). Residues 166–209 (FRETHDDHKGRIKCQNNYIVGTNWESSEHQTLGQWIHAACFGRR) lie on the Extracellular side of the membrane. The chain crosses the membrane as a helical span at residues 210–230 (FLLGFLLPFLVIVFCYKRVAT). Over 231–246 (KMKDKGLFKSSKPFKV) the chain is Cytoplasmic. The chain crosses the membrane as a helical span at residues 247–268 (MLTAVVSFFVCWMPYHVHSGLV). At 269 to 283 (LTKSQPLPSQLTLGL) the chain is on the extracellular side. Residues 284 to 303 (AVVTISFNTVVSPILYLFTG) form a helical membrane-spanning segment. The Cytoplasmic segment spans residues 304–339 (ENFEVFKKSILALFKSTFSDSSATERTQTLNSETEI).

It belongs to the G-protein coupled receptor 1 family.

It is found in the cell membrane. Its function is as follows. Orphan receptor; could be a chemoattractant receptor. The protein is Probable G-protein coupled receptor 33 (Gpr33) of Rattus rattus (Black rat).